Reading from the N-terminus, the 102-residue chain is Co-chaperonin GroES (102 aa).

It belongs to the GroES chaperonin family. As to quaternary structure, heptamer of 7 subunits arranged in a ring. Interacts with the chaperonin GroEL.

Its subcellular location is the cytoplasm. Together with the chaperonin GroEL, plays an essential role in assisting protein folding. The GroEL-GroES system forms a nano-cage that allows encapsulation of the non-native substrate proteins and provides a physical environment optimized to promote and accelerate protein folding. GroES binds to the apical surface of the GroEL ring, thereby capping the opening of the GroEL channel. The chain is Co-chaperonin GroES from Anabaena sp. (strain L31).